The primary structure comprises 272 residues: S-adenosylmethionine decarboxylase proenzyme (272 aa).

S117 functions as the Schiff-base intermediate with substrate; via pyruvic acid in the catalytic mechanism. S117 carries the post-translational modification Pyruvic acid (Ser); by autocatalysis. H122 (proton acceptor; for processing activity) is an active-site residue. C145 serves as the catalytic Proton donor; for catalytic activity.

This sequence belongs to the prokaryotic AdoMetDC family. Type 2 subfamily. As to quaternary structure, heterooctamer of four alpha and four beta chains arranged as a tetramer of alpha/beta heterodimers. Pyruvate serves as cofactor. Is synthesized initially as an inactive proenzyme. Formation of the active enzyme involves a self-maturation process in which the active site pyruvoyl group is generated from an internal serine residue via an autocatalytic post-translational modification. Two non-identical subunits are generated from the proenzyme in this reaction, and the pyruvate is formed at the N-terminus of the alpha chain, which is derived from the carboxyl end of the proenzyme. The post-translation cleavage follows an unusual pathway, termed non-hydrolytic serinolysis, in which the side chain hydroxyl group of the serine supplies its oxygen atom to form the C-terminus of the beta chain, while the remainder of the serine residue undergoes an oxidative deamination to produce ammonia and the pyruvoyl group blocking the N-terminus of the alpha chain.

It carries out the reaction S-adenosyl-L-methionine + H(+) = S-adenosyl 3-(methylsulfanyl)propylamine + CO2. It functions in the pathway amine and polyamine biosynthesis; S-adenosylmethioninamine biosynthesis; S-adenosylmethioninamine from S-adenosyl-L-methionine: step 1/1. Catalyzes the decarboxylation of S-adenosylmethionine to S-adenosylmethioninamine (dcAdoMet), the propylamine donor required for the synthesis of the polyamines spermine and spermidine from the diamine putrescine. The sequence is that of S-adenosylmethionine decarboxylase proenzyme from Halorhodospira halophila (strain DSM 244 / SL1) (Ectothiorhodospira halophila (strain DSM 244 / SL1)).